The chain runs to 449 residues: Glutamyl-tRNA reductase (449 aa).

Residues 49 to 52 (TCNR), Ser107, 112 to 114 (EPQ), and Gln118 contribute to the substrate site. The Nucleophile role is filled by Cys50. NADP(+) is bound at residue 187–192 (GAGETI). The tract at residues 418–449 (QLVERSSEGDDSQQAGADGGAARGDRRAAGGS) is disordered. The span at 440 to 449 (RGDRRAAGGS) shows a compositional bias: basic and acidic residues.

The protein belongs to the glutamyl-tRNA reductase family. Homodimer.

It catalyses the reaction (S)-4-amino-5-oxopentanoate + tRNA(Glu) + NADP(+) = L-glutamyl-tRNA(Glu) + NADPH + H(+). The protein operates within porphyrin-containing compound metabolism; protoporphyrin-IX biosynthesis; 5-aminolevulinate from L-glutamyl-tRNA(Glu): step 1/2. Functionally, catalyzes the NADPH-dependent reduction of glutamyl-tRNA(Glu) to glutamate 1-semialdehyde (GSA). The sequence is that of Glutamyl-tRNA reductase from Halorhodospira halophila (strain DSM 244 / SL1) (Ectothiorhodospira halophila (strain DSM 244 / SL1)).